We begin with the raw amino-acid sequence, 386 residues long: Patatin-07 (386 aa).

A signal peptide spans 1–23; sequence MATTKSFLILFFMILATTSSTCA. The PNPLA domain maps to 32 to 229; that stretch reads LSIDGGGIKG…TVADPALLSV (198 aa). Residues 36–41 carry the GXGXXG motif; the sequence is GGGIKG. The GXSXG motif lies at 75 to 79; it reads GTSTG. S77 serves as the catalytic Nucleophile. 2 N-linked (GlcNAc...) asparagine glycosylation sites follow: N115 and N202. The active-site Proton acceptor is the D215. The short motif at 215-217 is the DGA/G element; sequence DGA.

This sequence belongs to the patatin family. As to expression, tuber.

It localises to the vacuole. In terms of biological role, probable lipolytic acyl hydrolase (LAH), an activity which is thought to be involved in the response of tubers to pathogens. The chain is Patatin-07 from Solanum tuberosum (Potato).